Reading from the N-terminus, the 170-residue chain is Acireductone dioxygenase (170 aa).

Residues His-99, His-101, Glu-105, and His-144 each contribute to the Fe(2+) site. The Ni(2+) site is built by His-99, His-101, Glu-105, and His-144.

Belongs to the acireductone dioxygenase (ARD) family. In terms of assembly, monomer. Fe(2+) is required as a cofactor. The cofactor is Ni(2+).

The enzyme catalyses 1,2-dihydroxy-5-(methylsulfanyl)pent-1-en-3-one + O2 = 3-(methylsulfanyl)propanoate + CO + formate + 2 H(+). The catalysed reaction is 1,2-dihydroxy-5-(methylsulfanyl)pent-1-en-3-one + O2 = 4-methylsulfanyl-2-oxobutanoate + formate + 2 H(+). It participates in amino-acid biosynthesis; L-methionine biosynthesis via salvage pathway; L-methionine from S-methyl-5-thio-alpha-D-ribose 1-phosphate: step 5/6. In terms of biological role, catalyzes 2 different reactions between oxygen and the acireductone 1,2-dihydroxy-3-keto-5-methylthiopentene (DHK-MTPene) depending upon the metal bound in the active site. Fe-containing acireductone dioxygenase (Fe-ARD) produces formate and 2-keto-4-methylthiobutyrate (KMTB), the alpha-ketoacid precursor of methionine in the methionine recycle pathway. Ni-containing acireductone dioxygenase (Ni-ARD) produces methylthiopropionate, carbon monoxide and formate, and does not lie on the methionine recycle pathway. This is Acireductone dioxygenase from Bacillus mycoides (strain KBAB4) (Bacillus weihenstephanensis).